A 276-amino-acid chain; its full sequence is uncharacterized protein (276 aa).

Residues 1–70 (MSKAKSPIKS…SDDDEEDSPN (70 aa)) are disordered. Basic and acidic residues predominate over residues 21-35 (VLREKKVKDAEKAEH). The RRM domain maps to 105–183 (GVLYVGRLPH…KLLQCKVIPE (79 aa)). A disordered region spans residues 249–276 (VSHPKAASPVASKKSSKKKNKKVLAAHK). Low complexity predominate over residues 252-261 (PKAASPVASK). Positions 262-276 (KSSKKKNKKVLAAHK) are enriched in basic residues.

Its subcellular location is the nucleus. It is found in the nucleolus. This is an uncharacterized protein from Schizosaccharomyces pombe (strain 972 / ATCC 24843) (Fission yeast).